A 287-amino-acid chain; its full sequence is Inositol diphosphatase siw14 (287 aa).

Residues 85–256 (NFGVVYPGII…LNDLKRYISD (172 aa)) enclose the Tyrosine-protein phosphatase domain. Serine 156 and serine 159 each carry phosphoserine. The active-site Phosphocysteine intermediate is cysteine 189.

This sequence belongs to the protein-tyrosine phosphatase family. Atypical dual-specificity phosphatase Siw14-like subfamily.

It localises to the cytoplasm. It is found in the nucleus. It catalyses the reaction 5-diphospho-1D-myo-inositol 1,2,3,4,6-pentakisphosphate + H2O = 1D-myo-inositol hexakisphosphate + phosphate + H(+). It carries out the reaction 1-diphospho-1D-myo-inositol 2,3,4,5,6-pentakisphosphate + H2O = 1D-myo-inositol hexakisphosphate + phosphate + H(+). The enzyme catalyses 1,5-bis(diphospho)-1D-myo-inositol 2,3,4,6-tetrakisphosphate + H2O = 1-diphospho-1D-myo-inositol 2,3,4,5,6-pentakisphosphate + phosphate + 2 H(+). Activity is inhibited by the reaction product inorganic phosphate and by sulfate (a phosphate mimetic). Not inhibited by magnesium. In terms of biological role, cleaves the beta-phosphate at the 1- and 5-position of soluble inositol pyrophosphates. Has exopolyphosphatase activity in vitro but does not appear to contribute to the homeostasis of cellular polyphosphate. In Schizosaccharomyces pombe (strain 972 / ATCC 24843) (Fission yeast), this protein is Inositol diphosphatase siw14.